A 168-amino-acid polypeptide reads, in one-letter code: Lipoprotein signal peptidase (168 aa).

4 helical membrane passes run 15–35 (WLWL…VVMD), 47–67 (VLPF…SFLS), 75–95 (WLFT…MSKL), and 107–127 (ALII…GFVV). Residues D128 and D146 contribute to the active site. Residues 141-161 (AFNLADTTICIGAAMIILDGF) form a helical membrane-spanning segment.

This sequence belongs to the peptidase A8 family.

Its subcellular location is the cell inner membrane. The catalysed reaction is Release of signal peptides from bacterial membrane prolipoproteins. Hydrolyzes -Xaa-Yaa-Zaa-|-(S,diacylglyceryl)Cys-, in which Xaa is hydrophobic (preferably Leu), and Yaa (Ala or Ser) and Zaa (Gly or Ala) have small, neutral side chains.. The protein operates within protein modification; lipoprotein biosynthesis (signal peptide cleavage). In terms of biological role, this protein specifically catalyzes the removal of signal peptides from prolipoproteins. This Vibrio campbellii (strain ATCC BAA-1116) protein is Lipoprotein signal peptidase.